A 436-amino-acid polypeptide reads, in one-letter code: MAKEDEEPGAHRGGSTCSRPQPGKGGRTAACCSRPKVAALIVGTLLFLTGIGAASWAIVTILLQSDQEPLYQVQLSPGDSRLAVFDKTEGTWRLLCSSRSNARVAGLGCEEMGFLRALAHSELDVRTAGANGTSGFFCVDEGGLPLAQRLLDVISVCDCPRGRFLTATCQDCGRRKLPVDRIVGGQDSSLGRWPWQVSLRYDGTHLCGGSLLSGDWVLTAAHCFPERNRVLSRWRVFAGAVARTSPHAVQLGVQAVIYHGGYLPFRDPTIDENSNDIALVHLSSSLPLTEYIQPVCLPAAGQALVDGKVCTVTGWGNTQFYGQQAMVLQEARVPIISNEVCNSPDFYGNQIKPKMFCAGYPEGGIDACQGDSGGPFVCEDSISGTSRWRLCGIVSWGTGCALARKPGVYTKVTDFREWIFKAIKTHSEASGMVTQP.

The disordered stretch occupies residues 1-29 (MAKEDEEPGAHRGGSTCSRPQPGKGGRTA). The Cytoplasmic portion of the chain corresponds to 1–38 (MAKEDEEPGAHRGGSTCSRPQPGKGGRTAACCSRPKVA). The chain crosses the membrane as a helical; Signal-anchor for type II membrane protein span at residues 39–59 (ALIVGTLLFLTGIGAASWAIV). The Extracellular segment spans residues 60 to 436 (TILLQSDQEP…SEASGMVTQP (377 aa)). The region spanning 73-170 (VQLSPGDSRL…RGRFLTATCQ (98 aa)) is the SRCR domain. 8 disulfide bridges follow: Cys96–Cys159, Cys109–Cys169, Cys138–Cys157, Cys172–Cys296, Cys207–Cys223, Cys310–Cys378, Cys341–Cys357, and Cys368–Cys400. Asn131 carries N-linked (GlcNAc...) asparagine glycosylation. A Peptidase S1 domain is found at 182–424 (IVGGQDSSLG…FREWIFKAIK (243 aa)). Active-site charge relay system residues include His222 and Asp276. Ser372 serves as the catalytic Charge relay system.

Belongs to the peptidase S1 family. As to expression, detected in kidney, in thick ascending tubule epithelial cells (at protein level). Detected in kidney and liver.

The protein localises to the apical cell membrane. It localises to the cell membrane. It is found in the secreted. The catalysed reaction is Cleavage after basic amino-acid residues, with Arg strongly preferred to Lys.. Functionally, serine protease that cleaves extracellular substrates, and contributes to the proteolytic processing of growth factors, such as HGF and MST1/HGFL. Plays a role in cell growth and maintenance of cell morphology. Plays a role in the proteolytic processing of ACE2. Mediates the proteolytic cleavage of urinary UMOD that is required for UMOD polymerization. The protein is Serine protease hepsin (Hpn) of Mus musculus (Mouse).